A 72-amino-acid chain; its full sequence is uncharacterized protein (72 aa).

A helical membrane pass occupies residues 46–66; it reads AIFVFNLCFIPNLCVACIFNV.

The protein resides in the membrane. This is an uncharacterized protein from Saccharomyces cerevisiae (strain ATCC 204508 / S288c) (Baker's yeast).